A 374-amino-acid polypeptide reads, in one-letter code: 4-galactosyl-N-acetylglucosaminide 3-alpha-L-fucosyltransferase FUT5 (374 aa).

The Cytoplasmic segment spans residues 1 to 15 (MDPLGPAKPQWLWRR). The chain crosses the membrane as a helical; Signal-anchor for type II membrane protein span at residues 16–34 (CLAGLLFQLLVAVCFFSYL). The Lumenal segment spans residues 35–374 (RVSRDDATGS…TVRSIAAWFT (340 aa)). 4 N-linked (GlcNAc...) asparagine glycosylation sites follow: Asn60, Asn105, Asn167, and Asn198.

Belongs to the glycosyltransferase 10 family. In terms of tissue distribution, liver, colon and testis and trace amounts in T-cells and brain.

The protein localises to the golgi apparatus. It localises to the golgi stack membrane. It carries out the reaction a beta-D-galactosyl-(1-&gt;3)-N-acetyl-beta-D-glucosaminyl derivative + GDP-beta-L-fucose = a beta-D-galactosyl-(1-&gt;3)-[alpha-L-fucosyl-(1-&gt;4)]-N-acetyl-beta-D-glucosaminyl derivative + GDP + H(+). The catalysed reaction is an N-acetyl-alpha-neuraminyl-(2-&gt;3)-beta-D-galactosyl-(1-&gt;4)-N-acetyl-beta-D-glucosaminyl derivative + GDP-beta-L-fucose = an alpha-Neu5Ac-(2-&gt;3)-beta-D-Gal-(1-&gt;4)-[alpha-L-Fuc-(1-&gt;3)]-beta-D-GlcNAc derivative + GDP + H(+). It catalyses the reaction an alpha-Neu5Ac-(2-&gt;3)-beta-D-Gal-(1-&gt;4)-beta-D-GlcNAc-(1-&gt;3)-beta-D-Gal-(1-&gt;4)-[alpha-L-Fuc-(1-&gt;3)]-beta-D-GlcNAc derivative + GDP-beta-L-fucose = an alpha-Neu5Ac-(2-&gt;3)-beta-D-Gal-(1-&gt;4)-[alpha-L-Fuc-(1-&gt;3)]-beta-D-GlcNAc-(1-&gt;3)-beta-D-Gal-(1-&gt;4)-[alpha-L-Fuc-(1-&gt;3)]-beta-D-GlcNAc derivative + GDP + H(+). The enzyme catalyses a beta-D-galactosyl-(1-&gt;4)-N-acetyl-beta-D-glucosaminyl derivative + GDP-beta-L-fucose = a beta-D-galactosyl-(1-&gt;4)-[alpha-L-fucosyl-(1-&gt;3)]-N-acetyl-beta-D-glucosaminyl derivative + GDP + H(+). It carries out the reaction a neolactoside nLc4Cer + GDP-beta-L-fucose = a neolactoside III(3)-alpha-Fuc-nLc4Cer + GDP + H(+). The catalysed reaction is a neolactoside nLc6Cer + GDP-beta-L-fucose = beta-D-galactosyl-(1-&gt;4)-N-acetyl-beta-D-glucosaminyl-(1-&gt;3)-beta-D-galactosyl-(1-&gt;4)-[alpha-L-fucosyl-(1-&gt;3)]-N-acetyl-beta-D-glucosaminyl-(1-&gt;3)-beta-D-galactosyl-(1-&gt;4)-beta-D-glucosyl-(1&lt;-&gt;1')-ceramide + GDP + H(+). It catalyses the reaction a neolactoside nLc6Cer(d18:1(4E)) + GDP-beta-L-fucose = a neolactoside III(3)-alpha-Fuc-nLc6Cer(d18:1(4E)) + GDP + H(+). The enzyme catalyses a neolactoside nLc4Cer(d18:1(4E)) + GDP-beta-L-fucose = a neolactoside III(3)-alpha-Fuc-nLc4Cer(d18:1(4E)) + GDP + H(+). It carries out the reaction a neolactoside VI(3)-alpha-NeuNAc-nLc6Cer + GDP-beta-L-fucose = a neolactoside VI(3)-alpha-NeuAc,III(3)-alphaFuc-nLc6Cer + GDP + H(+). The catalysed reaction is beta-D-galactosyl-(1-&gt;4)-N-acetyl-D-glucosamine + GDP-beta-L-fucose = beta-D-galactosyl-(1-&gt;4)-[alpha-L-fucosyl-(1-&gt;3)]-N-acetyl-D-glucosamine + GDP + H(+). It catalyses the reaction N-acetyl-alpha-neuraminosyl-(2-&gt;3)-beta-D-galactosyl-(1-&gt;4)-N-acetyl-beta-D-glucosamine + GDP-beta-L-fucose = N-acetyl-alpha-neuraminosyl-(2-&gt;3)-beta-D-galactosyl-(1-&gt;4)-[alpha-L-fucosyl-(1-&gt;3)]-N-acetyl-beta-D-glucosamine + GDP + H(+). The enzyme catalyses alpha-L-Fuc-(1-&gt;2)-beta-D-Gal-(1-&gt;4)-D-GlcNAc + GDP-beta-L-fucose = alpha-L-Fuc-(1-&gt;2)-beta-D-Gal-(1-&gt;4)-[alpha-L-Fuc-(1-&gt;3)]-D-GlcNAc + GDP + H(+). It carries out the reaction an alpha-Neu5Ac-(2-&gt;3)-beta-D-Gal-(1-&gt;3)-D-GlcNAc derivative + GDP-beta-L-fucose = an alpha-Neu5Ac-(2-&gt;3)-beta-D-Gal-(1-&gt;3)-[alpha-L-Fuc-(1-&gt;4)]-beta-D-GlcNAc derivative + GDP + H(+). It participates in protein modification; protein glycosylation. Its function is as follows. Catalyzes preferentially the transfer of L-fucose, from a guanosine diphosphate-beta-L-fucose, to the N-acetyl-beta-D-glucosamine (GlcNAc) of an N-acetyllactosamine unit (type 2 chain) of an oligosaccharide, or a glycoprotein- and a glycolipid-linked N-acetyllactosamine unit via an alpha (1,3) linkage and participates in the surface expression of VIM-2, Lewis X/SSEA-1 and sialyl Lewis X antigens. Preferentially transfers fucose to the GlcNAc of an internal N-acetyllactosamine unit of a poly-N-acetyllactosamine chain acceptor substrate. Also catalyzes to a lesser extend the transfer of L-fucose to the GlcNAc of a type 1 (beta-D-galactosyl-(1-&gt;3)-N-acetyl-beta-D-glucosaminyl) or H-type 1 (alpha-L-Fuc-(1-&gt;2)-beta-D-Gal-(1-&gt;3)-D-GlcNAc) chain oligosaccharide via an alpha (1,4) linkage. Preferentially catalyzes sialylated type 2 oligosaccharide acceptors over neutral type 2 or H type 2 (alpha-L-Fuc-(1-&gt;2)-beta-D-Gal-(1-&gt;4)-D-GlcNAc) oligosaccharide acceptors. Lactose-based structures are also acceptor substrates. The chain is 4-galactosyl-N-acetylglucosaminide 3-alpha-L-fucosyltransferase FUT5 from Homo sapiens (Human).